Consider the following 208-residue polypeptide: dTTP/UTP pyrophosphatase (208 aa).

Residues 28-48 are disordered; it reads DRIHPADIDETPQRAEHPRSL. The Proton acceptor role is filled by Asp79.

This sequence belongs to the Maf family. YhdE subfamily. A divalent metal cation serves as cofactor.

The protein resides in the cytoplasm. The enzyme catalyses dTTP + H2O = dTMP + diphosphate + H(+). It carries out the reaction UTP + H2O = UMP + diphosphate + H(+). Its function is as follows. Nucleoside triphosphate pyrophosphatase that hydrolyzes dTTP and UTP. May have a dual role in cell division arrest and in preventing the incorporation of modified nucleotides into cellular nucleic acids. This is dTTP/UTP pyrophosphatase from Brucella abortus (strain 2308).